Consider the following 137-residue polypeptide: Nucleoside diphosphate kinase (137 aa).

Residues K9, F57, R85, T91, R102, and N112 each coordinate ATP. Catalysis depends on H115, which acts as the Pros-phosphohistidine intermediate.

Belongs to the NDK family. As to quaternary structure, homotetramer. It depends on Mg(2+) as a cofactor.

It localises to the cytoplasm. It carries out the reaction a 2'-deoxyribonucleoside 5'-diphosphate + ATP = a 2'-deoxyribonucleoside 5'-triphosphate + ADP. The catalysed reaction is a ribonucleoside 5'-diphosphate + ATP = a ribonucleoside 5'-triphosphate + ADP. In terms of biological role, major role in the synthesis of nucleoside triphosphates other than ATP. The ATP gamma phosphate is transferred to the NDP beta phosphate via a ping-pong mechanism, using a phosphorylated active-site intermediate. In Geotalea daltonii (strain DSM 22248 / JCM 15807 / FRC-32) (Geobacter daltonii), this protein is Nucleoside diphosphate kinase.